Reading from the N-terminus, the 297-residue chain is Small ribosomal subunit protein uS2 (297 aa).

Over residues 263-289 (AAPTSWEADGGDWAASSAAPAGESWAE) the composition is skewed to low complexity. The interval 263 to 297 (AAPTSWEADGGDWAASSAAPAGESWAETQPAEAKW) is disordered.

This sequence belongs to the universal ribosomal protein uS2 family. Component of the small ribosomal subunit. Mature ribosomes consist of a small (40S) and a large (60S) subunit. The 40S subunit contains about 33 different proteins and 1 molecule of RNA (18S). The 60S subunit contains about 49 different proteins and 3 molecules of RNA (25S, 5.8S and 5S). Interacts with rps21.

The protein localises to the cytoplasm. Functionally, required for the assembly and/or stability of the 40S ribosomal subunit. Required for the processing of the 20S rRNA-precursor to mature 18S rRNA in a late step of the maturation of 40S ribosomal subunits. The chain is Small ribosomal subunit protein uS2 (rps0) from Neosartorya fischeri (strain ATCC 1020 / DSM 3700 / CBS 544.65 / FGSC A1164 / JCM 1740 / NRRL 181 / WB 181) (Aspergillus fischerianus).